We begin with the raw amino-acid sequence, 643 residues long: Threonine--tRNA ligase (643 aa).

Residues 1–61 (MPIITLPDGS…EQDATLEIIT (61 aa)) form the TGS domain. The catalytic stretch occupies residues 243-534 (DHRKIGKALD…ITEEYAGFFP (292 aa)). Residues Cys334, His385, and His511 each coordinate Zn(2+).

Belongs to the class-II aminoacyl-tRNA synthetase family. As to quaternary structure, homodimer. Requires Zn(2+) as cofactor.

It localises to the cytoplasm. The enzyme catalyses tRNA(Thr) + L-threonine + ATP = L-threonyl-tRNA(Thr) + AMP + diphosphate + H(+). Catalyzes the attachment of threonine to tRNA(Thr) in a two-step reaction: L-threonine is first activated by ATP to form Thr-AMP and then transferred to the acceptor end of tRNA(Thr). Also edits incorrectly charged L-seryl-tRNA(Thr). This Haemophilus influenzae (strain PittGG) protein is Threonine--tRNA ligase.